Reading from the N-terminus, the 248-residue chain is NAD(P)H-quinone oxidoreductase subunit K 1 (248 aa).

Residues 1-2 constitute a propeptide that is removed on maturation; that stretch reads MS. C62, C63, C127, and C158 together coordinate [4Fe-4S] cluster. The disordered stretch occupies residues 228–248; that stretch reads MGMPVPPALTTSQQKEQLNRG. A compositionally biased stretch (polar residues) spans 236–248; the sequence is LTTSQQKEQLNRG.

It belongs to the complex I 20 kDa subunit family. NDH-1 can be composed of about 15 different subunits; different subcomplexes with different compositions have been identified which probably have different functions. The cofactor is [4Fe-4S] cluster.

Its subcellular location is the cellular thylakoid membrane. It carries out the reaction a plastoquinone + NADH + (n+1) H(+)(in) = a plastoquinol + NAD(+) + n H(+)(out). The enzyme catalyses a plastoquinone + NADPH + (n+1) H(+)(in) = a plastoquinol + NADP(+) + n H(+)(out). Functionally, NDH-1 shuttles electrons from an unknown electron donor, via FMN and iron-sulfur (Fe-S) centers, to quinones in the respiratory and/or the photosynthetic chain. The immediate electron acceptor for the enzyme in this species is believed to be plastoquinone. Couples the redox reaction to proton translocation, and thus conserves the redox energy in a proton gradient. Cyanobacterial NDH-1 also plays a role in inorganic carbon-concentration. This chain is NAD(P)H-quinone oxidoreductase subunit K 1, found in Synechocystis sp. (strain ATCC 27184 / PCC 6803 / Kazusa).